Here is a 67-residue protein sequence, read N- to C-terminus: Small ribosomal subunit protein bS21 (67 aa).

This sequence belongs to the bacterial ribosomal protein bS21 family.

In Granulibacter bethesdensis (strain ATCC BAA-1260 / CGDNIH1), this protein is Small ribosomal subunit protein bS21.